Here is a 335-residue protein sequence, read N- to C-terminus: Biotin synthase (335 aa).

Residues 47 to 276 (FYGKKVKLNM…SKEIRISGGR (230 aa)) enclose the Radical SAM core domain. [4Fe-4S] cluster contacts are provided by Cys65, Cys69, and Cys72. Positions 109, 141, 201, and 271 each coordinate [2Fe-2S] cluster.

It belongs to the radical SAM superfamily. Biotin synthase family. Homodimer. [4Fe-4S] cluster is required as a cofactor. The cofactor is [2Fe-2S] cluster.

It carries out the reaction (4R,5S)-dethiobiotin + (sulfur carrier)-SH + 2 reduced [2Fe-2S]-[ferredoxin] + 2 S-adenosyl-L-methionine = (sulfur carrier)-H + biotin + 2 5'-deoxyadenosine + 2 L-methionine + 2 oxidized [2Fe-2S]-[ferredoxin]. It functions in the pathway cofactor biosynthesis; biotin biosynthesis; biotin from 7,8-diaminononanoate: step 2/2. Catalyzes the conversion of dethiobiotin (DTB) to biotin by the insertion of a sulfur atom into dethiobiotin via a radical-based mechanism. In Bacillus subtilis (strain 168), this protein is Biotin synthase.